A 562-amino-acid polypeptide reads, in one-letter code: MDIKRTILIVALAIVTYVGVLKWNQDYGQAAMPTQNVAASNTAPGIPDTAAGNNGSASADVPSATGNTTSAAPLETPAVASKDLIHVKTDVLDLAIDPVGGDVVQLRLPLYPRRQDRPDVPFQLFDNGGERTFLAQSGLTGTNGPDARASGRPVYSSAQKSYQLADGQDSMVVELKFSENGVNYIKRFTFKRGLYDLVMTYVVDNQSAQPWAGNLFAQLKRDASSDPSSTTATGTATYLGAALWTAAEPYKKVSMKDIDKGQIKENVQGGWVAWLQHYFVTAWIPDHNVTNAVQTRKDSQGNYIIGFTSPTLSVAPGAQGETTATLYAGPKSQAVLKELSPGLELTVDYGFLWFIAQPIFWLLQHIHAILGNWGWSIIVLTMLIKGLFFPLSAASYKSMARMRAVAPKLAVLKEQHGDDRQKMSQAMMELYKKEKINPLGGCLPILVQMPVFLSLYWVLLESVEMRQAPWILWITDLSIKDPFFILPIIMGATMFIQQRLNPTPPDPMQAKVMKMMPIIFTFFFLWFPAGLVLYWVVNNTLSIAQQAYITRKIGAATKKAAA.

The chain crosses the membrane as a helical span at residues 1–21; the sequence is MDIKRTILIVALAIVTYVGVL. The interval 42–74 is disordered; sequence TAPGIPDTAAGNNGSASADVPSATGNTTSAAPL. 5 helical membrane-spanning segments follow: residues 343–363, 369–389, 439–459, 470–490, and 517–537; these read LELT…FWLL, ILGN…GLFF, LGGC…YWVL, WILW…PIIM, and PIIF…YWVV.

It belongs to the OXA1/ALB3/YidC family. Type 1 subfamily. Interacts with the Sec translocase complex via SecD. Specifically interacts with transmembrane segments of nascent integral membrane proteins during membrane integration.

The protein localises to the cell inner membrane. Functionally, required for the insertion and/or proper folding and/or complex formation of integral membrane proteins into the membrane. Involved in integration of membrane proteins that insert both dependently and independently of the Sec translocase complex, as well as at least some lipoproteins. Aids folding of multispanning membrane proteins. The chain is Membrane protein insertase YidC from Pseudomonas syringae pv. tomato (strain ATCC BAA-871 / DC3000).